The following is a 228-amino-acid chain: Prolactin-2B1 (228 aa).

Residues 1 to 31 (MLLYLPQIFSSRASSLLFLVPYLLFWENVAS) form the signal peptide. 2 disulfides stabilise this stretch: Cys89–Cys194 and Cys203–Cys228. Asn173 carries an N-linked (GlcNAc...) asparagine glycan.

Belongs to the somatotropin/prolactin family. Expression restricted to the placenta in trophoblast cells within the labyrinth zone.

The protein resides in the secreted. In Rattus norvegicus (Rat), this protein is Prolactin-2B1 (Prl2b1).